Consider the following 496-residue polypeptide: Geranylhydroquinone 3''-hydroxylase CYP76B74 (496 aa).

Residues 3–23 (YTTILVGFLIGFVLFKALTRK) traverse the membrane as a helical segment. C436 contributes to the heme binding site.

This sequence belongs to the cytochrome P450 family. Requires heme as cofactor.

It is found in the endoplasmic reticulum membrane. It catalyses the reaction (2E)-geranylhydroquinone + reduced [NADPH--hemoprotein reductase] + O2 = (2Z)-3''-hydroxygeranylhydroquinone + oxidized [NADPH--hemoprotein reductase] + H2O + H(+). Hydroxylase involved in the biosynthesis pathway of the red naphthoquinone pigment shikonin. Catalyzes the key step C-3''-hydroxylation of the prenylated phenolic intermediate geranylhydroquinone to form 3''-hydroxygeranylhydroquinone. This is Geranylhydroquinone 3''-hydroxylase CYP76B74 from Arnebia euchroma (Pink arnebia).